A 338-amino-acid chain; its full sequence is Histone acetyltransferase SAS2 (338 aa).

The segment covering 1–15 (MARSLSQSLTATTQK) has biased composition (polar residues). The segment at 1-31 (MARSLSQSLTATTQKLKGKKNGGKGKNKPSA) is disordered. Positions 16 to 31 (LKGKKNGGKGKNKPSA) are enriched in basic residues. One can recognise an MYST-type HAT domain in the interval 45–338 (LNERNIRQIQ…LKDEYLLIDD (294 aa)). A C2HC MYST-type zinc finger spans residues 100-126 (LFVCEYCFKYTDDQTRFVGHVASCPFQ). Lys-168 is modified (N6-acetyllysine; by autocatalysis). Acetyl-CoA is bound by residues 209-211 (ILI) and 216-222 (QRRGLGL). The active-site Proton donor/acceptor is Glu-242. Acetyl-CoA is bound by residues Ser-246 and Lys-323.

It belongs to the MYST (SAS/MOZ) family. In terms of assembly, interacts with CAC1. Component of the SAS complex, at least composed of SAS2, SAS4 and SAS5. These three proteins constitute the core of the complex and are sufficient to acetylate histones. SAS4 is essential for HAT activity of the complex, while SAS5 is required for maxiaml HAT activity. Post-translationally, autoacetylation at Lys-168 is required for proper function.

It is found in the cytoplasm. The protein localises to the nucleus. The enzyme catalyses L-lysyl-[protein] + acetyl-CoA = N(6)-acetyl-L-lysyl-[protein] + CoA + H(+). Histone acetyltransferase (HAT) subunit of the SAS complex, a multiprotein complex that acetylates 'Lys-16' of histone H4 and 'Lys-14' of histone H3. The SAS complex is however unable to acetylate nucleosomal histones. The complex is involved in transcriptional silencing at telomeres and at HML locus. Also involved in rDNA silencing and G0 control. This Saccharomyces cerevisiae (strain ATCC 204508 / S288c) (Baker's yeast) protein is Histone acetyltransferase SAS2 (SAS2).